A 912-amino-acid polypeptide reads, in one-letter code: Rho guanine nucleotide exchange factor 1 (912 aa).

An RGSL domain is found at 41 to 232; sequence EQNSQFQSLE…GLYMRHLGVR (192 aa). Residues 248–413 are disordered; sequence KVMGNRRSDE…PDTLHSLPKS (166 aa). Positions 283 to 313 are enriched in basic and acidic residues; the sequence is DFRHLKAEVDAEKPGATDRKGGVGMPSRDRN. Acidic residues predominate over residues 365 to 381; sequence STDEGAETESPEPGDEG. Ser374 and Ser409 each carry phosphoserine. One can recognise a DH domain in the interval 416 to 605; that stretch reads KRQEVISELL…REILHHVNQA (190 aa). The region spanning 647–760 is the PH domain; it reads KLVHEGPLTW…WCALITETAG (114 aa). At Thr695 the chain carries Phosphothreonine. Tyr738 carries the post-translational modification Phosphotyrosine; by JAK2. 2 disordered regions span residues 763 to 802 and 841 to 865; these read KVPA…PADA and AEED…LSPA. The segment covering 777-789 has biased composition (low complexity); sequence PSSTREPLLSSSE. Residue Ser863 is modified to Phosphoserine. Residues 865-896 adopt a coiled-coil conformation; the sequence is ARTQEIQENLLSLEETMKQLEELEEEFCRLRP.

Interacts with RHOA, GNA12 and GNA13. Homooligomerizes through the coiled coil region. May interact with CCPG1. Interacts with CTNNAL1. In terms of processing, phosphorylated by PKCA. Angiotensin-2 induced Tyr-738 phosphorylation is mediated by JAK2. In terms of tissue distribution, ubiquitously expressed.

It is found in the cytoplasm. It localises to the membrane. Its function is as follows. Seems to play a role in the regulation of RhoA GTPase by guanine nucleotide-binding alpha-12 (GNA12) and alpha-13 (GNA13) subunits. Acts as a GTPase-activating protein (GAP) for GNA12 and GNA13, and as guanine nucleotide exchange factor (GEF) for RhoA GTPase. Activated G alpha 13/GNA13 stimulates the RhoGEF activity through interaction with the RGS-like domain. This GEF activity is inhibited by binding to activated GNA12. Mediates angiotensin-2-induced RhoA activation. In lymphoid follicles, may trigger activation of GNA13 as part of S1PR2-dependent signaling pathway that leads to inhibition of germinal center (GC) B cell growth and migration outside the GC niche. The sequence is that of Rho guanine nucleotide exchange factor 1 (ARHGEF1) from Homo sapiens (Human).